The sequence spans 190 residues: Elongation factor P-like protein (190 aa).

Belongs to the elongation factor P family.

This is Elongation factor P-like protein from Serratia proteamaculans (strain 568).